The chain runs to 92 residues: UPF0335 protein BMEI0289 (92 aa).

It belongs to the UPF0335 family.

This chain is UPF0335 protein BMEI0289, found in Brucella melitensis biotype 1 (strain ATCC 23456 / CCUG 17765 / NCTC 10094 / 16M).